The primary structure comprises 367 residues: Peptide chain release factor 2 (367 aa).

An N5-methylglutamine modification is found at glutamine 254.

It belongs to the prokaryotic/mitochondrial release factor family. In terms of processing, methylated by PrmC. Methylation increases the termination efficiency of RF2.

Its subcellular location is the cytoplasm. In terms of biological role, peptide chain release factor 2 directs the termination of translation in response to the peptide chain termination codons UGA and UAA. The sequence is that of Peptide chain release factor 2 from Bordetella avium (strain 197N).